Reading from the N-terminus, the 160-residue chain is Large ribosomal subunit protein uL22c (160 aa).

Belongs to the universal ribosomal protein uL22 family. In terms of assembly, part of the 50S ribosomal subunit.

It localises to the plastid. Its subcellular location is the chloroplast. This protein binds specifically to 23S rRNA. In terms of biological role, the globular domain of the protein is located near the polypeptide exit tunnel on the outside of the subunit, while an extended beta-hairpin is found that lines the wall of the exit tunnel in the center of the 70S ribosome. This Nasturtium officinale (Watercress) protein is Large ribosomal subunit protein uL22c (rpl22).